A 261-amino-acid polypeptide reads, in one-letter code: Small ribosomal subunit protein mS23 (261 aa).

A disordered region spans residues 233–261 (RASSPSASWTNETEEEQKPIDQDVEEIQL).

The protein belongs to the mitochondrion-specific ribosomal protein mS23 family. Component of the mitochondrial small ribosomal subunit.

The protein localises to the mitochondrion. The sequence is that of Small ribosomal subunit protein mS23 (RSM25) from Kluyveromyces lactis (strain ATCC 8585 / CBS 2359 / DSM 70799 / NBRC 1267 / NRRL Y-1140 / WM37) (Yeast).